The chain runs to 291 residues: ATP synthase gamma chain (291 aa).

The protein belongs to the ATPase gamma chain family. In terms of assembly, F-type ATPases have 2 components, CF(1) - the catalytic core - and CF(0) - the membrane proton channel. CF(1) has five subunits: alpha(3), beta(3), gamma(1), delta(1), epsilon(1). CF(0) has three main subunits: a, b and c.

Its subcellular location is the cell inner membrane. Its function is as follows. Produces ATP from ADP in the presence of a proton gradient across the membrane. The gamma chain is believed to be important in regulating ATPase activity and the flow of protons through the CF(0) complex. This is ATP synthase gamma chain from Burkholderia thailandensis (strain ATCC 700388 / DSM 13276 / CCUG 48851 / CIP 106301 / E264).